A 993-amino-acid chain; its full sequence is DNA-binding protein SMUBP-2 (993 aa).

A2 carries the post-translational modification N-acetylalanine. Residues G213–T220, Q402, Y441, and E570 each bind ATP. Residues T637 to R783 form an SS DNA-binding region. Disordered stretches follow at residues Y650 to R723, L765 to T815, and R837 to V872. 2 stretches are compositionally biased toward polar residues: residues P667 to E683 and H703 to D716. The R3H domain occupies P721–S784. A compositionally biased stretch (basic and acidic residues) spans L765 to A775. The span at S784–Q794 shows a compositional bias: low complexity. Phosphoserine occurs at positions 797 and 800. The segment covering R837 to K847 has biased composition (polar residues). Residues K862–K866 carry the Nuclear localization signal motif. The AN1-type; degenerate zinc-finger motif lies at V889–A938. Zn(2+)-binding residues include C911, C914, H928, and C930. The interval G953–T993 is disordered. The segment covering T954–G976 has biased composition (basic and acidic residues).

This sequence belongs to the DNA2/NAM7 helicase family. Homooligomer. Interacts with RUVBL1. Interacts with RUVBL2. Interacts with GTF3C1. Interacts with ABT1. Interacts with ribosomes. In terms of tissue distribution, in all tissues examined.

It localises to the nucleus. The protein localises to the cytoplasm. Its subcellular location is the cell projection. It is found in the axon. It catalyses the reaction ATP + H2O = ADP + phosphate + H(+). In terms of biological role, 5' to 3' helicase that unwinds RNA and DNA duplexes in an ATP-dependent reaction. Specific to 5'-phosphorylated single-stranded guanine-rich sequences. May play a role in RNA metabolism, ribosome biogenesis or initiation of translation. May play a role in regulation of transcription. Interacts with tRNA-Tyr. The polypeptide is DNA-binding protein SMUBP-2 (Ighmbp2) (Mus musculus (Mouse)).